A 553-amino-acid chain; its full sequence is Glycerol kinase 3 (553 aa).

Thr-20 provides a ligand contact to substrate. Arg-24 provides a ligand contact to ATP. Substrate is bound by residues Arg-94, Tyr-148, and Asp-259. Residues Thr-281, Gly-326, and 427–431 each bind ATP; that span reads GMTSN.

The protein belongs to the FGGY kinase family.

The protein resides in the mitochondrion outer membrane. It is found in the cytoplasm. It catalyses the reaction glycerol + ATP = sn-glycerol 3-phosphate + ADP + H(+). Its pathway is polyol metabolism; glycerol degradation via glycerol kinase pathway; sn-glycerol 3-phosphate from glycerol: step 1/1. In terms of biological role, may be involved in the regulation of glycerol uptake and metabolism. This is Glycerol kinase 3 from Homo sapiens (Human).